The following is a 134-amino-acid chain: UPF0412 protein YaaI (134 aa).

The signal sequence occupies residues 1 to 23; the sequence is MKSVFTLSASLAISLLLCCTAQA.

This sequence belongs to the UPF0412 family.

This chain is UPF0412 protein YaaI, found in Escherichia coli (strain SMS-3-5 / SECEC).